We begin with the raw amino-acid sequence, 485 residues long: Putative aldehyde dehydrogenase AldY (485 aa).

231-236 lines the NAD(+) pocket; it reads GSTAVG. Active-site residues include E253 and C287.

Belongs to the aldehyde dehydrogenase family.

It catalyses the reaction an aldehyde + NAD(+) + H2O = a carboxylate + NADH + 2 H(+). In terms of biological role, may contribute to protect cells against stress due to ethanol and related compounds. This chain is Putative aldehyde dehydrogenase AldY (aldY), found in Bacillus subtilis (strain 168).